The primary structure comprises 253 residues: Imidazole glycerol phosphate synthase subunit HisF (253 aa).

Catalysis depends on residues D11 and D130.

It belongs to the HisA/HisF family. Heterodimer of HisH and HisF.

The protein localises to the cytoplasm. It carries out the reaction 5-[(5-phospho-1-deoxy-D-ribulos-1-ylimino)methylamino]-1-(5-phospho-beta-D-ribosyl)imidazole-4-carboxamide + L-glutamine = D-erythro-1-(imidazol-4-yl)glycerol 3-phosphate + 5-amino-1-(5-phospho-beta-D-ribosyl)imidazole-4-carboxamide + L-glutamate + H(+). It participates in amino-acid biosynthesis; L-histidine biosynthesis; L-histidine from 5-phospho-alpha-D-ribose 1-diphosphate: step 5/9. Functionally, IGPS catalyzes the conversion of PRFAR and glutamine to IGP, AICAR and glutamate. The HisF subunit catalyzes the cyclization activity that produces IGP and AICAR from PRFAR using the ammonia provided by the HisH subunit. This Cereibacter sphaeroides (strain ATCC 17029 / ATH 2.4.9) (Rhodobacter sphaeroides) protein is Imidazole glycerol phosphate synthase subunit HisF.